The chain runs to 183 residues: Translation initiation factor IF-3 (183 aa).

The protein belongs to the IF-3 family. As to quaternary structure, monomer.

Its subcellular location is the cytoplasm. Its function is as follows. IF-3 binds to the 30S ribosomal subunit and shifts the equilibrium between 70S ribosomes and their 50S and 30S subunits in favor of the free subunits, thus enhancing the availability of 30S subunits on which protein synthesis initiation begins. The protein is Translation initiation factor IF-3 of Serratia marcescens.